The primary structure comprises 300 residues: GTPase Era (300 aa).

One can recognise an Era-type G domain in the interval Lys-4 to Glu-172. The G1 stretch occupies residues Gly-12–Ser-19. Position 12–19 (Gly-12–Ser-19) interacts with GTP. The interval Gln-38–Asn-42 is G2. Residues Asp-59–Gly-62 form a G3 region. GTP contacts are provided by residues Asp-59–Val-63 and Asn-122–Asp-125. The tract at residues Asn-122–Asp-125 is G4. A G5 region spans residues Ile-151 to Ala-153. Positions Ile-195–Lys-281 constitute a KH type-2 domain.

This sequence belongs to the TRAFAC class TrmE-Era-EngA-EngB-Septin-like GTPase superfamily. Era GTPase family. In terms of assembly, monomer.

The protein resides in the cytoplasm. It is found in the cell membrane. An essential GTPase that binds both GDP and GTP, with rapid nucleotide exchange. Plays a role in 16S rRNA processing and 30S ribosomal subunit biogenesis and possibly also in cell cycle regulation and energy metabolism. In Caldicellulosiruptor saccharolyticus (strain ATCC 43494 / DSM 8903 / Tp8T 6331), this protein is GTPase Era.